The following is a 264-amino-acid chain: Transmembrane protein 41A (264 aa).

A signal peptide spans 1–17 (MRALLGLLLVFGGCTFA). A run of 5 helical transmembrane segments spans residues 67–87 (AYVF…AIPG), 100–122 (GPWL…CYLL), 153–173 (LFFF…FLNL), 175–195 (APIL…GLIP), and 219–239 (WETV…GTLI). A VTT domain region spans residues 96 to 207 (GALFGPWLGL…FICVQTGSIL (112 aa)).

This sequence belongs to the TMEM41 family.

Its subcellular location is the membrane. The sequence is that of Transmembrane protein 41A (Tmem41a) from Mus musculus (Mouse).